Consider the following 388-residue polypeptide: Chorismate synthase (388 aa).

Arginine 39 and arginine 45 together coordinate NADP(+). The segment at 95–118 (EKNEKSRRVSRPRPGHADLVGGMK) is disordered. FMN-binding positions include 130–132 (RSS), 251–252 (NA), glycine 296, 311–315 (KPIPT), and arginine 337.

It belongs to the chorismate synthase family. As to quaternary structure, homotetramer. The cofactor is FMNH2.

The enzyme catalyses 5-O-(1-carboxyvinyl)-3-phosphoshikimate = chorismate + phosphate. It functions in the pathway metabolic intermediate biosynthesis; chorismate biosynthesis; chorismate from D-erythrose 4-phosphate and phosphoenolpyruvate: step 7/7. Its function is as follows. Catalyzes the anti-1,4-elimination of the C-3 phosphate and the C-6 proR hydrogen from 5-enolpyruvylshikimate-3-phosphate (EPSP) to yield chorismate, which is the branch point compound that serves as the starting substrate for the three terminal pathways of aromatic amino acid biosynthesis. This reaction introduces a second double bond into the aromatic ring system. This is Chorismate synthase from Listeria monocytogenes serotype 4b (strain F2365).